We begin with the raw amino-acid sequence, 87 residues long: Lipid-anchored plasma membrane protein uvi15 (87 aa).

Residues Met-1 to Asp-64 form a disordered region. Low complexity predominate over residues Gln-18 to Pro-41.

The protein belongs to the CYSTM1 family. Palmitoylated.

Its subcellular location is the cell membrane. The protein localises to the cell tip. Functionally, required for the maintenance of viability of cells in stationary phase and in starvation conditions. This Schizosaccharomyces pombe (strain 972 / ATCC 24843) (Fission yeast) protein is Lipid-anchored plasma membrane protein uvi15 (uvi15).